The chain runs to 102 residues: Protein V2 (102 aa).

Functionally, may be involved in the regulation of ssDNA versus dsDNA levels. This chain is Protein V2, found in Beet curly top virus (strain California/Logan) (BCTV).